Reading from the N-terminus, the 389-residue chain is DNA damage checkpoint control protein RAD17 (389 aa).

The interval 358-389 (LAPPSAFPAEETQDPDESYHPAPSNTDIPLFL) is disordered. Over residues 380-389 (PSNTDIPLFL) the composition is skewed to polar residues.

The protein belongs to the rad1 family. In terms of assembly, component of the checkpoint clamp complex composed of DDC1, MEC3 and RAD17.

Its subcellular location is the nucleus. Component of the checkpoint clamp complex involved in the surveillance mechanism that allows the DNA repair pathways to act to restore the integrity of the DNA prior to DNA synthesis or separation of the replicated chromosomes. The sequence is that of DNA damage checkpoint control protein RAD17 (RAD17) from Eremothecium gossypii (strain ATCC 10895 / CBS 109.51 / FGSC 9923 / NRRL Y-1056) (Yeast).